Reading from the N-terminus, the 478-residue chain is Cytochrome c-552 (478 aa).

The N-terminal stretch at Met-1 to Ala-26 is a signal peptide. His-94 is a heme c binding site. 3 residues coordinate heme: Cys-122, Cys-125, and Lys-126. Heme c is bound by residues Cys-160, Cys-163, His-164, Cys-209, Cys-212, and His-213. Ca(2+)-binding residues include Glu-215, Tyr-216, Lys-261, and Gln-263. Substrate is bound at residue Tyr-216. Position 264 (His-264) interacts with substrate. Heme c is bound by residues His-275, Cys-282, Cys-285, His-286, His-301, Cys-314, Cys-317, His-318, and His-393.

This sequence belongs to the cytochrome c-552 family. Ca(2+) is required as a cofactor. Heme c serves as cofactor.

Its subcellular location is the periplasm. The catalysed reaction is 6 Fe(III)-[cytochrome c] + NH4(+) + 2 H2O = 6 Fe(II)-[cytochrome c] + nitrite + 8 H(+). The protein operates within nitrogen metabolism; nitrate reduction (assimilation). Functionally, catalyzes the reduction of nitrite to ammonia, consuming six electrons in the process. The polypeptide is Cytochrome c-552 (Salmonella typhi).